A 115-amino-acid chain; its full sequence is Holo-[acyl-carrier-protein] synthase (115 aa).

The Mg(2+) site is built by Asp8 and Glu50.

It belongs to the P-Pant transferase superfamily. AcpS family. Mg(2+) is required as a cofactor.

Its subcellular location is the cytoplasm. It catalyses the reaction apo-[ACP] + CoA = holo-[ACP] + adenosine 3',5'-bisphosphate + H(+). In terms of biological role, transfers the 4'-phosphopantetheine moiety from coenzyme A to a Ser of acyl-carrier-protein. The sequence is that of Holo-[acyl-carrier-protein] synthase from Cutibacterium acnes (strain DSM 16379 / KPA171202) (Propionibacterium acnes).